The following is a 452-amino-acid chain: Lamina-associated polypeptide 2, isoforms beta/delta/epsilon/gamma (452 aa).

The nucleoplasmic stretch occupies residues 1-409 (MPEFLEDPSV…KSEKTKKRRS (409 aa)). One can recognise an LEM-like domain in the interval 5 to 48 (LEDPSVLTKDKLKSELVANNVTLPAGEQRKDVYVQLYLQHLTAR). Disordered regions lie at residues 48–111 (RNRP…DLDV) and 149–263 (REQG…RVET). Residues 49-108 (NRPPLAAGANSKGPPDFSSDEEREPTPVLGSGASVGRGRGAVGRKATKKTDKPRLEDKDD) form a linker region. A phosphoserine mark is found at S59, S66, and S67. Residue T74 is modified to Phosphothreonine. 2 positions are modified to phosphoserine: S79 and S82. 2 positions are modified to omega-N-methylarginine: R85 and R87. The segment covering 96 to 105 (KKTDKPRLED) has biased composition (basic and acidic residues). One can recognise an LEM domain in the interval 109–153 (LDVTELSNEELLDQLVRYGVNPGPIVGTTRKLYEKKLLKLREQGT). The NAKAP95-binding N stretch occupies residues 137–242 (TRKLYEKKLL…TSGSSTGGPL (106 aa)). The residue at position 153 (T153) is a Phosphothreonine. A compositionally biased stretch (polar residues) spans 154-177 (ESRSSTPLPTVSSSAENTRQNGSN). Residues S155 and S158 each carry the phosphoserine modification. Phosphothreonine occurs at positions 159 and 163. 3 positions are modified to phosphoserine: S165, S167, and S176. Basic and acidic residues predominate over residues 178–202 (DSDRYSDNDEDSKIELKLEKREPLK). S179 carries the post-translational modification Phosphoserine; by PKC. Phosphoserine is present on residues S183 and S189. At K206 the chain carries N6-acetyllysine. Phosphothreonine is present on T210. S221 and S223 each carry phosphoserine. Over residues 226–240 (GVTETEWTSGSSTGG) the composition is skewed to low complexity. 6 positions are modified to phosphoserine: S249, S253, S264, S291, S305, and S306. A binds lamins B region spans residues 298–370 (TGNFKHASSI…SCRRPIKGAA (73 aa)). Residues 299-373 (GNFKHASSIL…RPIKGAAGRP (75 aa)) are NAKAP95-binding C. Position 311 is a phosphothreonine (T311). S314 bears the Phosphoserine mark. Position 319 is a citrulline (R319). 3 positions are modified to phosphoserine: S361, S377, and S384. K388 is subject to N6-acetyllysine. Residue K400 forms a Glycyl lysine isopeptide (Lys-Gly) (interchain with G-Cter in SUMO2) linkage. At S401 the chain carries Phosphoserine. The helical; Signal-anchor for type II membrane protein transmembrane segment at 410 to 430 (VPMWIKMLLFALVAVFLFLVY) threads the bilayer. Over 431–452 (QAMETNQGNPFTNFLQDTKISN) the chain is Lumenal.

Belongs to the LEM family. As to quaternary structure, interacts with LMNB1, LMNB2, BANF1, AKAP8L, GMCL and chromosomes. In terms of processing, mitosis-specific phosphorylation specifically abolishes its binding to lamin B and chromosomes. Citrullinated by PADI4.

It localises to the nucleus inner membrane. The protein resides in the chromosome. In terms of biological role, may help direct the assembly of the nuclear lamina and thereby help maintain the structural organization of the nuclear envelope. Possible receptor for attachment of lamin filaments to the inner nuclear membrane. May be involved in the control of initiation of DNA replication through its interaction with NAKAP95. This chain is Lamina-associated polypeptide 2, isoforms beta/delta/epsilon/gamma (Tmpo), found in Mus musculus (Mouse).